A 255-amino-acid polypeptide reads, in one-letter code: tRNA (guanine-N(1)-)-methyltransferase (255 aa).

Residues G113 and 133–138 (VGDFVL) contribute to the S-adenosyl-L-methionine site.

The protein belongs to the RNA methyltransferase TrmD family. Homodimer.

Its subcellular location is the cytoplasm. The enzyme catalyses guanosine(37) in tRNA + S-adenosyl-L-methionine = N(1)-methylguanosine(37) in tRNA + S-adenosyl-L-homocysteine + H(+). Its function is as follows. Specifically methylates guanosine-37 in various tRNAs. This is tRNA (guanine-N(1)-)-methyltransferase from Francisella philomiragia subsp. philomiragia (strain ATCC 25017 / CCUG 19701 / FSC 153 / O#319-036).